The following is a 211-amino-acid chain: Probable nicotinate-nucleotide adenylyltransferase (211 aa).

It belongs to the NadD family.

The catalysed reaction is nicotinate beta-D-ribonucleotide + ATP + H(+) = deamido-NAD(+) + diphosphate. Its pathway is cofactor biosynthesis; NAD(+) biosynthesis; deamido-NAD(+) from nicotinate D-ribonucleotide: step 1/1. Functionally, catalyzes the reversible adenylation of nicotinate mononucleotide (NaMN) to nicotinic acid adenine dinucleotide (NaAD). The polypeptide is Probable nicotinate-nucleotide adenylyltransferase (Wigglesworthia glossinidia brevipalpis).